The following is an 86-amino-acid chain: Large ribosomal subunit protein bL27 (86 aa).

The segment at 1–24 (MAHKKGTGSTRNGRDSNSKRLGVK) is disordered.

This sequence belongs to the bacterial ribosomal protein bL27 family.

The chain is Large ribosomal subunit protein bL27 from Prochlorococcus marinus (strain MIT 9312).